A 200-amino-acid polypeptide reads, in one-letter code: Dephospho-CoA kinase (200 aa).

The DPCK domain occupies 4–200 (VLALTGGIAT…QLLIKIKEEG (197 aa)). 12-17 (ATGKST) is a binding site for ATP.

The protein belongs to the CoaE family.

It localises to the cytoplasm. It carries out the reaction 3'-dephospho-CoA + ATP = ADP + CoA + H(+). It functions in the pathway cofactor biosynthesis; coenzyme A biosynthesis; CoA from (R)-pantothenate: step 5/5. Functionally, catalyzes the phosphorylation of the 3'-hydroxyl group of dephosphocoenzyme A to form coenzyme A. The polypeptide is Dephospho-CoA kinase (Lactobacillus acidophilus (strain ATCC 700396 / NCK56 / N2 / NCFM)).